A 374-amino-acid polypeptide reads, in one-letter code: Glutamate 5-kinase (374 aa).

An ATP-binding site is contributed by Lys-9. Ser-49, Asp-136, and Asn-148 together coordinate substrate. Residues Thr-168–Asp-169 and Thr-210–Lys-216 contribute to the ATP site. Residues Ala-276–His-354 enclose the PUA domain.

The protein belongs to the glutamate 5-kinase family.

The protein resides in the cytoplasm. It carries out the reaction L-glutamate + ATP = L-glutamyl 5-phosphate + ADP. Its pathway is amino-acid biosynthesis; L-proline biosynthesis; L-glutamate 5-semialdehyde from L-glutamate: step 1/2. Functionally, catalyzes the transfer of a phosphate group to glutamate to form L-glutamate 5-phosphate. The protein is Glutamate 5-kinase of Geobacillus kaustophilus (strain HTA426).